We begin with the raw amino-acid sequence, 195 residues long: Antigenic thaumatin-like protein ARB_01183 (195 aa).

Residues 1–22 form the signal peptide; that stretch reads MHSNTAVIALSALAALVPAALA. 2 disulfides stabilise this stretch: Cys-125-Cys-153 and Cys-130-Cys-137. A disordered region spans residues 171–195; sequence GPKKMFKPVQEKAANRPRHPHARPE. Over residues 185-195 the composition is skewed to basic residues; it reads NRPRHPHARPE.

The protein belongs to the thaumatin family.

The protein resides in the secreted. Its function is as follows. Might be involved in the inhibition of growth of fungal competitors and pathogenicity. The polypeptide is Antigenic thaumatin-like protein ARB_01183 (Arthroderma benhamiae (strain ATCC MYA-4681 / CBS 112371) (Trichophyton mentagrophytes)).